Reading from the N-terminus, the 1454-residue chain is ABC transporter G family member 43 (1454 aa).

The segment at 23–47 (ARSLRDGDDPFRRSAAASRRDAGDD) is disordered. A compositionally biased stretch (basic and acidic residues) spans 25–44 (SLRDGDDPFRRSAAASRRDA). The N-linked (GlcNAc...) asparagine glycan is linked to N163. The 275-residue stretch at 170–444 (EGLVSLFISS…FESAGFRCPE (275 aa)) folds into the ABC transporter 1 domain. Residue 204–211 (GPPSSGKS) participates in ATP binding. An N-linked (GlcNAc...) asparagine glycan is attached at N393. The region spanning 524-735 (LKAVMSREWL…SNNALSVNEF (212 aa)) is the ABC transmembrane type-2 1 domain. 6 consecutive transmembrane segments (helical) span residues 540–560 (FLFIFKAFQLFVLGFITMTLF), 577–597 (VGALTASLITIMFNGFGELQL), 613–630 (FFPAWTYGLANIILKVPL), 637–656 (LWIVLTYYVVGFAPAAGRFF), 659–679 (FLAYFWTHQMALALFRLLGAI), and 684–704 (VVANTFGMFVLLLIFLFGGFL). N745 carries an N-linked (GlcNAc...) asparagine glycan. A helical membrane pass occupies residues 775-795 (IGAMIGFMIVFNILYLCALTF). A disordered region spans residues 804–823 (TVVSDDDTKSELEAESNQEQ). Residues N829 and N832 are each glycosylated (N-linked (GlcNAc...) asparagine). In terms of domain architecture, ABC transporter 2 spans 852 to 1104 (LSFNHMNYYV…ILVEYFEAIP (253 aa)). Residue 897–904 (GVSGAGKT) coordinates ATP. N-linked (GlcNAc...) asparagine glycosylation is present at N951. The region spanning 1178–1391 (QCVANTWKQF…TIYGVIASQF (214 aa)) is the ABC transmembrane type-2 2 domain. A run of 7 helical transmembrane segments spans residues 1196–1216 (YNAMRYVMTLLYGLVFGTVFW), 1236–1256 (YAAVFFLGAANLLTLLPVVSV), 1284–1304 (FCYSAVQGVLYTILIYSMIGY), 1314–1334 (FLFFMIAAFAYFTLFSMMLVA), 1341–1361 (LAAVLVSFVLSSWNNFAGFII), 1372–1392 (WFYWANPVSWTIYGVIASQFA), and 1423–1443 (FLGYVVLAHFGYVIIFFFLFG).

Belongs to the ABC transporter superfamily. ABCG family. PDR (TC 3.A.1.205) subfamily. Specifically expressed in the vasculature of roots, stems, panicles, sheaths and leaves.

It is found in the cell membrane. Functionally, ABC transporter modulating cadmium (Cd) import, thus controlling Cd(2+) accumulation to prevent phytotoxicity. Confers high tolerance to Cd in yeast. Prevents leaf bacteria proliferation, such as Xanthomonas oryzae pv. oryzicola (Xoc) RS105 and X.oryzae pv. oryzae (Xoo) PXO99, by triggering Cd accumulation, which in turn impairs bacterial virulence factors. This Oryza sativa subsp. japonica (Rice) protein is ABC transporter G family member 43.